Here is a 354-residue protein sequence, read N- to C-terminus: GDSL esterase/lipase At3g09930 (354 aa).

Residues 1 to 24 (MELPKLLISLFLFSFSSFFLGAES) form the signal peptide. The Nucleophile role is filled by serine 46. 5 N-linked (GlcNAc...) asparagine glycosylation sites follow: asparagine 133, asparagine 233, asparagine 237, asparagine 256, and asparagine 300. Catalysis depends on residues aspartate 329 and histidine 332.

It belongs to the 'GDSL' lipolytic enzyme family.

It localises to the secreted. This chain is GDSL esterase/lipase At3g09930, found in Arabidopsis thaliana (Mouse-ear cress).